Reading from the N-terminus, the 1588-residue chain is Pentafunctional AROM polypeptide (1588 aa).

A 3-dehydroquinate synthase region spans residues methionine 1–aspartate 392. Residues aspartate 43–asparagine 45, glutamate 78–lysine 81, glycine 109–valine 111, and aspartate 114 contribute to the NAD(+) site. Arginine 125 contributes to the 7-phospho-2-dehydro-3-deoxy-D-arabino-heptonate binding site. Threonine 134–serine 135 lines the NAD(+) pocket. 7-phospho-2-dehydro-3-deoxy-D-arabino-heptonate is bound by residues aspartate 141 and lysine 147. Position 156 (lysine 156) interacts with NAD(+). Asparagine 157 is a binding site for 7-phospho-2-dehydro-3-deoxy-D-arabino-heptonate. NAD(+)-binding positions include tryptophan 174–threonine 177 and asparagine 185. Zn(2+) is bound at residue glutamate 189. Residues glutamate 189–lysine 192 and lysine 258 each bind 7-phospho-2-dehydro-3-deoxy-D-arabino-heptonate. Glutamate 268 serves as the catalytic Proton acceptor; for 3-dehydroquinate synthase activity. Residues arginine 272–asparagine 276 and histidine 279 each bind 7-phospho-2-dehydro-3-deoxy-D-arabino-heptonate. Position 279 (histidine 279) interacts with Zn(2+). Histidine 283 functions as the Proton acceptor; for 3-dehydroquinate synthase activity in the catalytic mechanism. 7-phospho-2-dehydro-3-deoxy-D-arabino-heptonate is bound by residues histidine 295 and lysine 364. Residue histidine 295 coordinates Zn(2+). The interval valine 405–alanine 871 is EPSP synthase. Catalysis depends on cysteine 853, which acts as the For EPSP synthase activity. A shikimate kinase region spans residues serine 890–cysteine 1080. Glycine 895–threonine 902 contacts ATP. The tract at residues leucine 1081 to glutamine 1293 is 3-dehydroquinase. Histidine 1198 acts as the Proton acceptor; for 3-dehydroquinate dehydratase activity in catalysis. The Schiff-base intermediate with substrate; for 3-dehydroquinate dehydratase activity role is filled by lysine 1227. The interval proline 1306–glutamate 1588 is shikimate dehydrogenase.

In the N-terminal section; belongs to the sugar phosphate cyclases superfamily. Dehydroquinate synthase family. The protein in the 2nd section; belongs to the EPSP synthase family. It in the 3rd section; belongs to the shikimate kinase family. This sequence in the 4th section; belongs to the type-I 3-dehydroquinase family. In the C-terminal section; belongs to the shikimate dehydrogenase family. In terms of assembly, homodimer. Requires Zn(2+) as cofactor.

The protein resides in the cytoplasm. The catalysed reaction is 7-phospho-2-dehydro-3-deoxy-D-arabino-heptonate = 3-dehydroquinate + phosphate. It carries out the reaction 3-dehydroquinate = 3-dehydroshikimate + H2O. The enzyme catalyses shikimate + NADP(+) = 3-dehydroshikimate + NADPH + H(+). It catalyses the reaction shikimate + ATP = 3-phosphoshikimate + ADP + H(+). The catalysed reaction is 3-phosphoshikimate + phosphoenolpyruvate = 5-O-(1-carboxyvinyl)-3-phosphoshikimate + phosphate. It functions in the pathway metabolic intermediate biosynthesis; chorismate biosynthesis; chorismate from D-erythrose 4-phosphate and phosphoenolpyruvate: step 2/7. It participates in metabolic intermediate biosynthesis; chorismate biosynthesis; chorismate from D-erythrose 4-phosphate and phosphoenolpyruvate: step 3/7. The protein operates within metabolic intermediate biosynthesis; chorismate biosynthesis; chorismate from D-erythrose 4-phosphate and phosphoenolpyruvate: step 4/7. Its pathway is metabolic intermediate biosynthesis; chorismate biosynthesis; chorismate from D-erythrose 4-phosphate and phosphoenolpyruvate: step 5/7. It functions in the pathway metabolic intermediate biosynthesis; chorismate biosynthesis; chorismate from D-erythrose 4-phosphate and phosphoenolpyruvate: step 6/7. The AROM polypeptide catalyzes 5 consecutive enzymatic reactions in prechorismate polyaromatic amino acid biosynthesis. The sequence is that of Pentafunctional AROM polypeptide from Saccharomyces cerevisiae (strain ATCC 204508 / S288c) (Baker's yeast).